The chain runs to 116 residues: U30-theraphotoxin-Cg1b (116 aa).

The signal sequence occupies residues 1-17 (MKLCVLTIATLLVTATS). Positions 18-53 (LETQKEIAEGNELTREETPSLVEHKEDEAAAASEKR) are excised as a propeptide. The interval 25 to 45 (AEGNELTREETPSLVEHKEDE) is disordered. Cystine bridges form between cysteine 55–cysteine 69, cysteine 62–cysteine 75, cysteine 66–cysteine 112, and cysteine 68–cysteine 88.

The protein belongs to the neurotoxin 03 (Tx2) family. 02 subfamily. As to expression, expressed by the venom gland.

It is found in the secreted. Functionally, probable ion channel inhibitor. This is U30-theraphotoxin-Cg1b from Chilobrachys guangxiensis (Chinese earth tiger tarantula).